The chain runs to 403 residues: Phosphopentomutase (403 aa).

The Mn(2+) site is built by aspartate 13, aspartate 298, histidine 303, aspartate 339, histidine 340, and histidine 351.

The protein belongs to the phosphopentomutase family. Mn(2+) serves as cofactor.

The protein resides in the cytoplasm. It carries out the reaction 2-deoxy-alpha-D-ribose 1-phosphate = 2-deoxy-D-ribose 5-phosphate. The catalysed reaction is alpha-D-ribose 1-phosphate = D-ribose 5-phosphate. It participates in carbohydrate degradation; 2-deoxy-D-ribose 1-phosphate degradation; D-glyceraldehyde 3-phosphate and acetaldehyde from 2-deoxy-alpha-D-ribose 1-phosphate: step 1/2. In terms of biological role, isomerase that catalyzes the conversion of deoxy-ribose 1-phosphate (dRib-1-P) and ribose 1-phosphate (Rib-1-P) to deoxy-ribose 5-phosphate (dRib-5-P) and ribose 5-phosphate (Rib-5-P), respectively. In Streptococcus pneumoniae (strain Hungary19A-6), this protein is Phosphopentomutase.